The sequence spans 460 residues: Keratin, type I cytoskeletal 27 (460 aa).

A head region spans residues 1–83; sequence MSVRFSSASR…GNEHGLLSGN (83 aa). Positions 84–119 are coil 1A; it reads EKVTMQNLNDRLASYLDNVRALEEANADLEQKIKGW. In terms of domain architecture, IF rod spans 84–399; that stretch reads EKVTMQNLND…RLIDGEDGSC (316 aa). Residues 120 to 141 are linker 1; the sequence is YEKFGPGSCRGLDHDYSRYFTV. The tract at residues 142 to 233 is coil 1B; it reads IDDLRNQIIS…KNHEEEMKAL (92 aa). Residues 234–256 form a linker 12 region; it reads QCAAGGNVNVEMNAAPGVDLTVL. Residues 257-395 form a coil 2 region; the sequence is LNNMRAEYEA…ETYCRLIDGE (139 aa). The segment at 396–460 is tail; it reads DGSCAKSKGY…NVKSEQRVPS (65 aa). The segment at 435 to 460 is disordered; that stretch reads LSSRVHSVEEKSTKVNNVKSEQRVPS. A compositionally biased stretch (polar residues) spans 448–460; the sequence is KVNNVKSEQRVPS.

This sequence belongs to the intermediate filament family. As to quaternary structure, heterotetramer of two type I and two type II keratins. Interacts with KRT6A to form filaments.

Its subcellular location is the cytoplasm. Its function is as follows. Essential for the proper assembly of type I and type II keratin protein complexes and formation of keratin intermediate filaments in the inner root sheath (irs). The protein is Keratin, type I cytoskeletal 27 of Bos taurus (Bovine).